A 147-amino-acid polypeptide reads, in one-letter code: 3-dehydroquinate dehydratase (147 aa).

Residue Tyr23 is the Proton acceptor of the active site. Asn75, His81, and Asp88 together coordinate substrate. His101 acts as the Proton donor in catalysis. Substrate contacts are provided by residues Leu102–Ser103 and Arg112.

The protein belongs to the type-II 3-dehydroquinase family. Homododecamer.

It catalyses the reaction 3-dehydroquinate = 3-dehydroshikimate + H2O. It participates in metabolic intermediate biosynthesis; chorismate biosynthesis; chorismate from D-erythrose 4-phosphate and phosphoenolpyruvate: step 3/7. Its function is as follows. Catalyzes a trans-dehydration via an enolate intermediate. The sequence is that of 3-dehydroquinate dehydratase from Nitrosococcus oceani (strain ATCC 19707 / BCRC 17464 / JCM 30415 / NCIMB 11848 / C-107).